Consider the following 316-residue polypeptide: MVTSTKIHRQHDSMGAVCKSYYQLTKPRIIPLLLITTAASMWIASEGRVDLPKLLITLLGGTLAAASAQTLNCIYDQDIDYEMLRTRARPIPAGKVQPRHALIFALALGVLSFALLATFVNVLSGCLALSGIVFYMLVYTHWLKRHTAQNIVIGGAAGSIPPLVGWAAVTGDLSWTPWVLFALIFLWTPPHFWALALMIKDDYAQVNVPMLPVIAGEEKTVSQIWYYSLLVVPFSLLLVYPLHQLGILYLAIAIILGGQFLVKAWQLKQAPGDRDLARGLFKFSIFYLMLLCLAMVIDSLPVTHQLVAQMGTLLLG.

9 helical membrane-spanning segments follow: residues 29–49, 54–74, 102–122, 123–143, 151–171, 179–199, 224–241, 245–267, and 283–303; these read IIPLLLITTAASMWIASEGRV, LLITLLGGTLAAASAQTLNCI, LIFALALGVLSFALLATFVNV, LSGCLALSGIVFYMLVYTHWL, IVIGGAAGSIPPLVGWAAVTG, VLFALIFLWTPPHFWALALMI, IWYYSLLVVPFSLLLVYP, LGILYLAIAIILGGQFLVKAWQL, and FSIFYLMLLCLAMVIDSLPVT.

It belongs to the UbiA prenyltransferase family. Protoheme IX farnesyltransferase subfamily.

Its subcellular location is the cell inner membrane. The catalysed reaction is heme b + (2E,6E)-farnesyl diphosphate + H2O = Fe(II)-heme o + diphosphate. The protein operates within porphyrin-containing compound metabolism; heme O biosynthesis; heme O from protoheme: step 1/1. Converts heme B (protoheme IX) to heme O by substitution of the vinyl group on carbon 2 of heme B porphyrin ring with a hydroxyethyl farnesyl side group. This chain is Protoheme IX farnesyltransferase, found in Synechocystis sp. (strain ATCC 27184 / PCC 6803 / Kazusa).